The sequence spans 358 residues: Carbamoyl phosphate synthase small chain (358 aa).

The interval 1–172 (MKAALALEDG…EAKRFESDGD (172 aa)) is CPSase. L-glutamine is bound by residues serine 45, glycine 222, and glycine 224. One can recognise a Glutamine amidotransferase type-1 domain in the interval 174 to 358 (EVVLVDCGVK…RYVDMLREYR (185 aa)). Catalysis depends on cysteine 249, which acts as the Nucleophile. 4 residues coordinate L-glutamine: leucine 250, glutamine 253, asparagine 291, and phenylalanine 294. Residues histidine 333 and glutamate 335 contribute to the active site.

Belongs to the CarA family. Composed of two chains; the small (or glutamine) chain promotes the hydrolysis of glutamine to ammonia, which is used by the large (or ammonia) chain to synthesize carbamoyl phosphate. Tetramer of heterodimers (alpha,beta)4.

The enzyme catalyses hydrogencarbonate + L-glutamine + 2 ATP + H2O = carbamoyl phosphate + L-glutamate + 2 ADP + phosphate + 2 H(+). It catalyses the reaction L-glutamine + H2O = L-glutamate + NH4(+). It participates in amino-acid biosynthesis; L-arginine biosynthesis; carbamoyl phosphate from bicarbonate: step 1/1. The protein operates within pyrimidine metabolism; UMP biosynthesis via de novo pathway; (S)-dihydroorotate from bicarbonate: step 1/3. In terms of biological role, small subunit of the glutamine-dependent carbamoyl phosphate synthetase (CPSase). CPSase catalyzes the formation of carbamoyl phosphate from the ammonia moiety of glutamine, carbonate, and phosphate donated by ATP, constituting the first step of 2 biosynthetic pathways, one leading to arginine and/or urea and the other to pyrimidine nucleotides. The small subunit (glutamine amidotransferase) binds and cleaves glutamine to supply the large subunit with the substrate ammonia. This is Carbamoyl phosphate synthase small chain from Archaeoglobus fulgidus (strain ATCC 49558 / DSM 4304 / JCM 9628 / NBRC 100126 / VC-16).